Reading from the N-terminus, the 389-residue chain is Succinate--CoA ligase [ADP-forming] subunit beta (389 aa).

One can recognise an ATP-grasp domain in the interval 9–236 (RDMFEAHGVP…KDSADPLEAK (228 aa)). ATP is bound by residues lysine 45, 52–54 (GRG), alanine 94, and glutamate 99. Positions 191 and 205 each coordinate Mg(2+). Substrate contacts are provided by residues asparagine 256 and 318–320 (GIT).

The protein belongs to the succinate/malate CoA ligase beta subunit family. As to quaternary structure, heterotetramer of two alpha and two beta subunits. Requires Mg(2+) as cofactor.

The enzyme catalyses succinate + ATP + CoA = succinyl-CoA + ADP + phosphate. It carries out the reaction GTP + succinate + CoA = succinyl-CoA + GDP + phosphate. It participates in carbohydrate metabolism; tricarboxylic acid cycle; succinate from succinyl-CoA (ligase route): step 1/1. Its function is as follows. Succinyl-CoA synthetase functions in the citric acid cycle (TCA), coupling the hydrolysis of succinyl-CoA to the synthesis of either ATP or GTP and thus represents the only step of substrate-level phosphorylation in the TCA. The beta subunit provides nucleotide specificity of the enzyme and binds the substrate succinate, while the binding sites for coenzyme A and phosphate are found in the alpha subunit. In Renibacterium salmoninarum (strain ATCC 33209 / DSM 20767 / JCM 11484 / NBRC 15589 / NCIMB 2235), this protein is Succinate--CoA ligase [ADP-forming] subunit beta.